Consider the following 134-residue polypeptide: Small ribosomal subunit protein uS8c (134 aa).

This sequence belongs to the universal ribosomal protein uS8 family. Part of the 30S ribosomal subunit.

The protein localises to the plastid. The protein resides in the chloroplast. Its function is as follows. One of the primary rRNA binding proteins, it binds directly to 16S rRNA central domain where it helps coordinate assembly of the platform of the 30S subunit. In Gossypium hirsutum (Upland cotton), this protein is Small ribosomal subunit protein uS8c (rps8).